The sequence spans 768 residues: Protein ITPRID2 (768 aa).

Disordered regions lie at residues 1–24 (MTTEDHLLRTASQHSDSSGFAEDS), 39–78 (LQAMGSSADSCDSETTVTSLGEDLATPTAQDQPYFNESEE), and 98–124 (RKSGSQDFPQCNTIENPGTKQSTCSPG). Composition is skewed to polar residues over residues 39-57 (LQAMGSSADSCDSETTVTS) and 102-122 (SQDFPQCNTIENPGTKQSTCS). Ser153, Ser177, Ser246, Ser248, Ser255, Ser268, Ser276, and Ser312 each carry phosphoserine. Residues 315–338 (SVKKEEAPQSEAPRVEECHHGRTP) are disordered. Over residues 316–334 (VKKEEAPQSEAPRVEECHH) the composition is skewed to basic and acidic residues. Lys317 is covalently cross-linked (Glycyl lysine isopeptide (Lys-Gly) (interchain with G-Cter in SUMO2)). A phosphoserine mark is found at Ser378 and Ser411. A coiled-coil region spans residues 468-546 (QELQVMRRSL…GLEEQLRAVR (79 aa)). A phosphoserine mark is found at Ser549, Ser564, Ser569, Ser572, Ser627, and Ser643. Disordered stretches follow at residues 605–647 (IPPG…VGKP) and 663–718 (ALTP…AAEE). The segment covering 610 to 627 (SSESVFSQATSESSSVCS) has biased composition (polar residues). Thr665 carries the post-translational modification Phosphothreonine. Positions 667-677 (TAPSRTGSVQT) are enriched in polar residues. Ser670 is subject to Phosphoserine. Thr677 carries the phosphothreonine modification. The span at 682 to 694 (ESSEEVDAAEEAP) shows a compositional bias: acidic residues.

It localises to the cytoplasm. This chain is Protein ITPRID2, found in Pongo abelii (Sumatran orangutan).